Reading from the N-terminus, the 489-residue chain is MLSFWDVAIDFSPEERECLEPDQWDLYRDVMLENYSHLDFLGLALSKPFLVTFLEQRQGPWDVKRQAAAAVHPGKTVNKCKDFSKAFFCKSLLTQHQRIRTGEKAFKCEECGKAFNNRSNLSEHKRIHTGEKPYKCEECGKAFRIRSKLSTHQRVHTGEKPYKCEECGKAFNSHSNLSEHKRIHTGEKPYKCEECGKAFSTRSTYYRHQKNHTGKKPYKCEECAKEFSYPSLLKVHQRIHSAEKSYKCEECGKPFYCPLLLKKHQIIHSAEKPYKCAECGKAFHYPSLLKRHQRIHAGKKPCKCKDCDRAFYSSAFLKRHQRIHSEENSYKCGECGKRFCSFPHLQYHQRFHSGEKPYKCEQCGKTFSTLSYLPWHKLRHSGEKSYKCEKCGKMFYSTLDLKKHQKIHEYKCGECHYGFPNYAALTAHQRVHTGEKPHVCEQCGKDFSRIDSLNQHQLVHTGEKPYKCEKCGKCFYRSSSLKRHQGIHS.

The 72-residue stretch at 2–73 (LSFWDVAIDF…KRQAAAAVHP (72 aa)) folds into the KRAB domain. The segment at 78–100 (NKCKDFSKAFFCKSLLTQHQRIR) adopts a C2H2-type 1; degenerate zinc-finger fold. C2H2-type zinc fingers lie at residues 106–128 (FKCE…KRIH), 134–156 (YKCE…QRVH), 162–184 (YKCE…KRIH), 190–212 (YKCE…QKNH), 218–240 (YKCE…QRIH), 246–268 (YKCE…QIIH), 274–296 (YKCA…QRIH), 302–324 (CKCK…QRIH), 330–352 (YKCG…QRFH), 358–380 (YKCE…KLRH), 386–408 (YKCE…QKIH), 410–432 (YKCG…QRVH), 438–460 (HVCE…QLVH), and 466–488 (YKCE…QGIH).

This sequence belongs to the krueppel C2H2-type zinc-finger protein family. In terms of tissue distribution, expressed in liver, testis and, at considerably lower levels, in brain, spleen and heart.

It localises to the nucleus. Its function is as follows. May have a role during differentiation processes. This Mus musculus (Mouse) protein is Zinc finger protein 58 (Zfp58).